A 355-amino-acid polypeptide reads, in one-letter code: Aurora kinase (355 aa).

Residues 89 to 340 form the Protein kinase domain; it reads FEIGKPLGKG…LEQVMRHPWI (252 aa). ATP contacts are provided by residues 95–103 and Lys-118; that span reads LGKGKFGRV. Asp-212 functions as the Proton acceptor in the catalytic mechanism.

This sequence belongs to the protein kinase superfamily. Ser/Thr protein kinase family. Aurora subfamily. In terms of assembly, component of the CPC complex at least composed of ark1, bir1 and pic1. Interacts with the mitotic checkpoint complex (MCC) subunit mad3.

The protein resides in the nucleus. It is found in the cytoplasm. Its subcellular location is the cytoskeleton. The protein localises to the spindle. It catalyses the reaction L-seryl-[protein] + ATP = O-phospho-L-seryl-[protein] + ADP + H(+). The catalysed reaction is L-threonyl-[protein] + ATP = O-phospho-L-threonyl-[protein] + ADP + H(+). Its function is as follows. Component of the chromosomal passenger complex (CPC), a complex that acts as a key regulator of chromosome segregation and cytokinesis. Has a role in error-correction of aberrent kinetochore-microtubule attachments to ensure that sister kinetochores become bioriented and connect to opposite poles by promoting spindle assembly checkpoint signaling. Ark1 is also required for phosphorylation of histone H3 that accompanies chromosome condensation and condensin recruitment to mitotic chromatin. The chain is Aurora kinase (ark1) from Schizosaccharomyces pombe (strain 972 / ATCC 24843) (Fission yeast).